The primary structure comprises 547 residues: MTAKDVKFGNDARVKMLAGVNVLADAVKVTLGPKGRNVILDKAFGAPTITKDGVSVAREIELEDKFENMGAQMVKEVASKANDAAGDGTTTATVLAQAIVSEGLKAVAAGMNPMDLKRGIDKAVNAVVEELKILSKPCETSKEIEQVGTISANADETVGKLIAQAMEKVGKEGVITVEDGSGLSDELDVVEGMQFDRGYLSPYFINKPEAATVELDNPFILLVDKKISNIRELLPVLEGVAKAGKPLLIIAEDVEGEALATLVVNTMRGIVKVAAVKAPGFGDRRKAMLQDIAILTAGTVISEEIGMELEKATLEDLGQAKRVVINKDNTTIIDGIGDEAQIKGRVAQIRQQIEEATSDYDKEKLQERVAKLAGGVAVIKVGAATEVEMKEKKDRVDDALHATRAAVEEGIVAGGGVALIRAATKVATTLKGDNEDQDVGIKLALRAMEAPLRQIVTNAGEEASVVASAVKNGEGNFGYNAGTEQYGDMIAMGILDPTKVTRSALQFAASIAGLMVTTECMVADLPKEEKADLTGGMGGMGGMGGMM.

Residues Thr30–Pro33, Lys51, Asp87–Thr91, Gly415, and Asp496 contribute to the ATP site.

This sequence belongs to the chaperonin (HSP60) family. In terms of assembly, forms a cylinder of 14 subunits composed of two heptameric rings stacked back-to-back. Interacts with the co-chaperonin GroES.

The protein resides in the cytoplasm. It carries out the reaction ATP + H2O + a folded polypeptide = ADP + phosphate + an unfolded polypeptide.. Functionally, together with its co-chaperonin GroES, plays an essential role in assisting protein folding. The GroEL-GroES system forms a nano-cage that allows encapsulation of the non-native substrate proteins and provides a physical environment optimized to promote and accelerate protein folding. This chain is Chaperonin GroEL, found in Histophilus somni (strain 129Pt) (Haemophilus somnus).